The following is a 90-amino-acid chain: uncharacterized protein (90 aa).

A disordered region spans residues Arg-62–Arg-90. The segment covering Phe-78–Arg-90 has biased composition (polar residues).

This is an uncharacterized protein from Escherichia coli (strain K12).